A 156-amino-acid polypeptide reads, in one-letter code: Single-stranded DNA-binding protein 1 (156 aa).

Positions 1–104 constitute an SSB domain; it reads MLNRTILVGR…VVADSIQFLE (104 aa). The segment at 122–146 is disordered; that stretch reads QTRGQSQYSNNKPVKDNPFANANCP.

As to quaternary structure, homotetramer.

The protein is Single-stranded DNA-binding protein 1 (ssb1) of Staphylococcus aureus (strain MSSA476).